The chain runs to 284 residues: 4-hydroxy-3-methylbut-2-enyl diphosphate reductase (284 aa).

C12 is a [4Fe-4S] cluster binding site. Positions 40 and 72 each coordinate (2E)-4-hydroxy-3-methylbut-2-enyl diphosphate. H40 and H72 together coordinate dimethylallyl diphosphate. Isopentenyl diphosphate-binding residues include H40 and H72. C94 contributes to the [4Fe-4S] cluster binding site. Position 122 (H122) interacts with (2E)-4-hydroxy-3-methylbut-2-enyl diphosphate. H122 contributes to the dimethylallyl diphosphate binding site. H122 is an isopentenyl diphosphate binding site. The active-site Proton donor is E124. T161 is a binding site for (2E)-4-hydroxy-3-methylbut-2-enyl diphosphate. C193 contributes to the [4Fe-4S] cluster binding site. Positions 221, 223, and 264 each coordinate (2E)-4-hydroxy-3-methylbut-2-enyl diphosphate. Dimethylallyl diphosphate contacts are provided by S221, N223, and S264. The isopentenyl diphosphate site is built by S221, N223, and S264.

The protein belongs to the IspH family. [4Fe-4S] cluster is required as a cofactor.

The catalysed reaction is isopentenyl diphosphate + 2 oxidized [2Fe-2S]-[ferredoxin] + H2O = (2E)-4-hydroxy-3-methylbut-2-enyl diphosphate + 2 reduced [2Fe-2S]-[ferredoxin] + 2 H(+). It carries out the reaction dimethylallyl diphosphate + 2 oxidized [2Fe-2S]-[ferredoxin] + H2O = (2E)-4-hydroxy-3-methylbut-2-enyl diphosphate + 2 reduced [2Fe-2S]-[ferredoxin] + 2 H(+). The protein operates within isoprenoid biosynthesis; dimethylallyl diphosphate biosynthesis; dimethylallyl diphosphate from (2E)-4-hydroxy-3-methylbutenyl diphosphate: step 1/1. Its pathway is isoprenoid biosynthesis; isopentenyl diphosphate biosynthesis via DXP pathway; isopentenyl diphosphate from 1-deoxy-D-xylulose 5-phosphate: step 6/6. Functionally, catalyzes the conversion of 1-hydroxy-2-methyl-2-(E)-butenyl 4-diphosphate (HMBPP) into a mixture of isopentenyl diphosphate (IPP) and dimethylallyl diphosphate (DMAPP). Acts in the terminal step of the DOXP/MEP pathway for isoprenoid precursor biosynthesis. The chain is 4-hydroxy-3-methylbut-2-enyl diphosphate reductase from Dehalococcoides mccartyi (strain CBDB1).